The chain runs to 619 residues: MPKLRSATSTEGRNMAGARALWRATGVKDNDFGKPIIAIANSFTQFVPGHVHLKDMGSLVADAIEEAGGIAKEFNTIAVDDGIAMGHGGMLYSLPSRELIADSVEYMVNAHCADALVCISNCDKITPGMLMAALRLNIPVVFVSGGPMEAGKTKLSDKLIKLDLVDAMVAAADSSVSDEDSAKIERSACPTCGSCSGMFTANSMNCLTEALGLSLPGNGSMLATHADRRELFLEAGRRVMALTKRYYEQDDASALPRNIASFKAFENAMALDIAMGGSSNTVLHLLAAAQEADVAFTMDDIDRMSRQVPHLCKVAPSTAKYHMEDVHRAGGVMGILGELDRAGLLHTDVPHVAADAGGNLKSVLAKYDVMQTQDDKVKQFFMAGPAGIPTTKAFSQDCRWPSLDDDRREGCIRSREFAFSQEGGLAVLSGNLADNGCIVKTAGVDESNLTFIGSARVYESQDDAVAGILGGEVVAGDVVVIRYEGPKGGPGMQEMLYPTSYLKSRGLGKACALITDGRFSGGTSGLSIGHVSPEAAAGGTIALIENGDRIEIDIPKRSIKLAVSDAELAARRETMLARGPMAWKPLSRQRYVSMALKAYAMLATSADKGAVRDRSKLED.

Residue Asp81 coordinates Mg(2+). Cys122 contacts [2Fe-2S] cluster. Mg(2+)-binding residues include Asp123 and Lys124. The residue at position 124 (Lys124) is an N6-carboxylysine. Cys195 contributes to the [2Fe-2S] cluster binding site. Glu494 is a Mg(2+) binding site. Catalysis depends on Ser520, which acts as the Proton acceptor.

The protein belongs to the IlvD/Edd family. Homodimer. [2Fe-2S] cluster is required as a cofactor. Requires Mg(2+) as cofactor.

The catalysed reaction is (2R)-2,3-dihydroxy-3-methylbutanoate = 3-methyl-2-oxobutanoate + H2O. It carries out the reaction (2R,3R)-2,3-dihydroxy-3-methylpentanoate = (S)-3-methyl-2-oxopentanoate + H2O. It participates in amino-acid biosynthesis; L-isoleucine biosynthesis; L-isoleucine from 2-oxobutanoate: step 3/4. Its pathway is amino-acid biosynthesis; L-valine biosynthesis; L-valine from pyruvate: step 3/4. Functions in the biosynthesis of branched-chain amino acids. Catalyzes the dehydration of (2R,3R)-2,3-dihydroxy-3-methylpentanoate (2,3-dihydroxy-3-methylvalerate) into 2-oxo-3-methylpentanoate (2-oxo-3-methylvalerate) and of (2R)-2,3-dihydroxy-3-methylbutanoate (2,3-dihydroxyisovalerate) into 2-oxo-3-methylbutanoate (2-oxoisovalerate), the penultimate precursor to L-isoleucine and L-valine, respectively. The protein is Dihydroxy-acid dehydratase of Shewanella sp. (strain ANA-3).